Here is a 310-residue protein sequence, read N- to C-terminus: Tyrosine recombinase XerC (310 aa).

The 87-residue stretch at 11 to 97 folds into the Core-binding (CB) domain; the sequence is NSLQKPLSRF…SLRSFFDFLV (87 aa). The region spanning 118 to 298 is the Tyr recombinase domain; that stretch reads PLPKNLDVDE…DFQHLAQAYD (181 aa). Active-site residues include Arg157, Lys181, His250, Arg253, and His276. The active-site O-(3'-phospho-DNA)-tyrosine intermediate is the Tyr285.

The protein belongs to the 'phage' integrase family. XerC subfamily. Forms a cyclic heterotetrameric complex composed of two molecules of XerC and two molecules of XerD.

It localises to the cytoplasm. In terms of biological role, site-specific tyrosine recombinase, which acts by catalyzing the cutting and rejoining of the recombining DNA molecules. The XerC-XerD complex is essential to convert dimers of the bacterial chromosome into monomers to permit their segregation at cell division. It also contributes to the segregational stability of plasmids. The chain is Tyrosine recombinase XerC from Vibrio atlanticus (strain LGP32) (Vibrio splendidus (strain Mel32)).